The following is a 569-amino-acid chain: Membrane protein insertase YidC (569 aa).

8 consecutive transmembrane segments (helical) span residues 7 to 24, 219 to 239, 299 to 319, 340 to 360, 366 to 386, 436 to 456, 485 to 505, and 526 to 546; these read VLWVIFSFSLLMLWDNYN, GSALGGGSMFMASAFTGPAIY, LYAVGTILPMGTVAPGATASM, FELVKDYGWLTIIAKPIFWLM, ILGNWGWTIIVLTIVIKLAFF, IGGCFPMLVQIPVFISLYWVL, IGTFHLTIGILPILMAISMFI, and PIAFSVMFFFFPAGLVLYWVV.

This sequence belongs to the OXA1/ALB3/YidC family. Type 1 subfamily. In terms of assembly, interacts with the Sec translocase complex via SecD. Specifically interacts with transmembrane segments of nascent integral membrane proteins during membrane integration.

It is found in the cell inner membrane. Required for the insertion and/or proper folding and/or complex formation of integral membrane proteins into the membrane. Involved in integration of membrane proteins that insert both dependently and independently of the Sec translocase complex, as well as at least some lipoproteins. Aids folding of multispanning membrane proteins. This is Membrane protein insertase YidC from Herminiimonas arsenicoxydans.